We begin with the raw amino-acid sequence, 294 residues long: Glycine--tRNA ligase alpha subunit (294 aa).

Belongs to the class-II aminoacyl-tRNA synthetase family. In terms of assembly, tetramer of two alpha and two beta subunits.

The protein localises to the cytoplasm. The enzyme catalyses tRNA(Gly) + glycine + ATP = glycyl-tRNA(Gly) + AMP + diphosphate. The protein is Glycine--tRNA ligase alpha subunit of Natranaerobius thermophilus (strain ATCC BAA-1301 / DSM 18059 / JW/NM-WN-LF).